The following is a 520-amino-acid chain: MTELIKLSAAALAAKLASGEVTSVQVTQAYLDRIALVDGELNAFLHLNAEEALRVAAEVDADRAAGKELHELAGVPIAIKDLIVTKGQPTTAGSKILEGWISPYDATVIEKIRAAKMPILGKTNLDEFAMGSSTEHSAFGPTRNPWDLTRIPGGSGGGSAAAVAAFEAPLALGTDTGGSIRQPGAVTGTVGVKPTYGGVSRYGAIAMASSLDQIGPVSRTVLDAALLQEVIGGHDPKDSTSLVDPINGQTGCTGLADAARLGANGDLTGVRIGVVKELGGEGYQEGVEVRFRESLELLRGAGAEIVEVSCPSFGYALGAYYLIMPSEASSNLAKFDGVRFGLRKLPEDGPMTIERVMSATRAAGFGNEVKRRIILGAYALSAGYYDAYYGSAQKFRTLIQRDFEAAFAQADVLISPTAPTTAFKFGEKMADPLAMYLNDVATIPANLAGVPGMSLPNGLADEDGLPSGIQLLAPAREDALMYRVGAALEALHEAQWGGPILDRAPELGAASNATAVEGTK.

Active-site charge relay system residues include Lys-80 and Ser-155. Ser-179 serves as the catalytic Acyl-ester intermediate.

The protein belongs to the amidase family. GatA subfamily. In terms of assembly, heterotrimer of A, B and C subunits.

It carries out the reaction L-glutamyl-tRNA(Gln) + L-glutamine + ATP + H2O = L-glutaminyl-tRNA(Gln) + L-glutamate + ADP + phosphate + H(+). Its function is as follows. Allows the formation of correctly charged Gln-tRNA(Gln) through the transamidation of misacylated Glu-tRNA(Gln) in organisms which lack glutaminyl-tRNA synthetase. The reaction takes place in the presence of glutamine and ATP through an activated gamma-phospho-Glu-tRNA(Gln). The chain is Glutamyl-tRNA(Gln) amidotransferase subunit A from Renibacterium salmoninarum (strain ATCC 33209 / DSM 20767 / JCM 11484 / NBRC 15589 / NCIMB 2235).